Reading from the N-terminus, the 425-residue chain is Serine--tRNA ligase (425 aa).

L-serine is bound at residue 228–230 (TSE). 259 to 261 (RSE) contacts ATP. E282 provides a ligand contact to L-serine. An ATP-binding site is contributed by 346 to 349 (EISS). L-serine is bound at residue S384.

Belongs to the class-II aminoacyl-tRNA synthetase family. Type-1 seryl-tRNA synthetase subfamily. As to quaternary structure, homodimer. The tRNA molecule binds across the dimer.

It localises to the cytoplasm. The enzyme catalyses tRNA(Ser) + L-serine + ATP = L-seryl-tRNA(Ser) + AMP + diphosphate + H(+). It catalyses the reaction tRNA(Sec) + L-serine + ATP = L-seryl-tRNA(Sec) + AMP + diphosphate + H(+). Its pathway is aminoacyl-tRNA biosynthesis; selenocysteinyl-tRNA(Sec) biosynthesis; L-seryl-tRNA(Sec) from L-serine and tRNA(Sec): step 1/1. Catalyzes the attachment of serine to tRNA(Ser). Is also able to aminoacylate tRNA(Sec) with serine, to form the misacylated tRNA L-seryl-tRNA(Sec), which will be further converted into selenocysteinyl-tRNA(Sec). The polypeptide is Serine--tRNA ligase (Ehrlichia ruminantium (strain Gardel)).